We begin with the raw amino-acid sequence, 606 residues long: Mitogen-activated protein kinase kinase kinase 7 (606 aa).

The interaction with MAPK8IP1 stretch occupies residues 1–300 (MSTASAASSS…FPGADEPLQY (300 aa)). Residues 36–291 (IEVEEVVGRG…KIMTHLMRYF (256 aa)) form the Protein kinase domain. Residues 42–50 (VGRGAFGVV) and Lys-63 each bind ATP. Lys-72 participates in a covalent cross-link: Glycyl lysine isopeptide (Lys-Gly) (interchain with G-Cter in ubiquitin). Catalysis depends on Asp-156, which acts as the Proton acceptor. Residue Lys-158 forms a Glycyl lysine isopeptide (Lys-Gly) (interchain with G-Cter in ubiquitin) linkage. Residues Thr-184 and Thr-187 each carry the (Microbial infection) O-acetylthreonine; by Yersinia YopJ; alternate modification. Thr-184 and Thr-187 each carry phosphothreonine; by autocatalysis; alternate. Ser-192 is subject to Phosphoserine; by autocatalysis. Lys-209 is covalently cross-linked (Glycyl lysine isopeptide (Lys-Gly) (interchain with G-Cter in ubiquitin)). A disordered region spans residues 301 to 338 (PCQYSDEGQSNSATSTGSFMDIASTNTSNKSDTNMEQV). Residues 306-338 (DEGQSNSATSTGSFMDIASTNTSNKSDTNMEQV) show a composition bias toward polar residues. Thr-341 bears the (Microbial infection) O-acetylthreonine; by Yersinia YopJ; alternate mark. Positions 354–391 (KNQAKQQSESGRLSLGASRGSSVESLPPTSEGKRMSAD) are disordered. Positions 361-375 (SESGRLSLGASRGSS) are enriched in low complexity. Ser-367, Ser-389, and Ser-439 each carry phosphoserine. Residues 443–452 (LTVTGTEPGQ) are compositionally biased toward polar residues. The interval 443 to 493 (LTVTGTEPGQVSSRSSSPSVRMITTSGPTSEKPTRSHPWTPDDSTDTNGSD) is disordered. 3 positions are modified to (Microbial infection) O-acetylthreonine; by Yersinia YopJ; alternate: Thr-444, Thr-446, and Thr-448. Residues 453–463 (VSSRSSSPSVR) are compositionally biased toward low complexity. A Phosphoserine modification is found at Ser-455. Positions 464-473 (MITTSGPTSE) are enriched in polar residues. At Thr-467 the chain carries (Microbial infection) O-acetylthreonine; by Yersinia YopJ; alternate.

The protein belongs to the protein kinase superfamily. STE Ser/Thr protein kinase family. MAP kinase kinase kinase subfamily. As to quaternary structure, can form homodimer. Binds both upstream activators and downstream substrates in multimolecular complexes. Interacts with TAB1/MAP3K7IP1, TAB2/MAP3K7IP2 and TAB3/MAP3K7IP3. Identified in the TRIKA2 complex composed of MAP3K7/TAK1, TAB1/MAP3K7IP1 and TAB2/MAP3K7IP2. Interacts with PPM1L and PPM1B/PP2CB. Interaction with PP2A and PPP6C leads to its repressed activity. Interacts with TRAF6 and TAB1/MAP3K7IP1; during IL-1 signaling. Interacts with TAOK1 and TAOK2; interaction with TAOK2 interferes with MAP3K7 interaction with IKKA, thus preventing NF-kappa-B activation. Interacts with DYNC2I2 (via WD domains). Interacts with CYLD and RBCK1. Interacts with TGFBR1; induces MAP3K7/TAK1 activation by TRAF6. Interacts with MAPK8IP1 and SMAD6. Interacts with isoform 1 of VRK2. Interacts with DAB2; the interaction is induced by TGF-beta stimulation and may mediate TGF-beta stimulated JNK activation. Interacts with TRIM5. Part of a complex containing ITCH, NDFIP1 and MAP3K7. Interacts with IFIT5; the interaction synergizes the recruitment of IKK to MAP3K7 and enhances IKK phosphorylation. Interacts with PLEKHM1 (via N- and C-terminus). Interacts with TRIM8. Found in a complex with SH3RF1, RAC2, MAP2K7/MKK7, MAPK8IP1/JIP1, MAPK8/JNK1 and MAPK9/JNK2. Interacts with SASH1. Interacts with RIPK1. (Microbial infection) Interacts with herpes simplex virus 2 protein US2; this interaction induces MAP3K7 phosphorylation and subsequent activation. The cofactor is Mg(2+). Post-translationally, association with TAB1/MAP3K7IP1 promotes autophosphorylation at Ser-192 and subsequent activation. Association with TAB2/MAP3K7IP2, itself associated with free unanchored Lys-63 polyubiquitin chain, promotes autophosphorylation and subsequent activation of MAP3K7. Dephosphorylation at Ser-192 by PPM1B/PP2CB and at Thr-187 by PP2A and PPP6C leads to inactivation. In terms of processing, 'Lys-48'-linked polyubiquitination at Lys-72 is induced by TNFalpha, and leads to proteasomal degradation. Undergoes 'Lys-48'-linked polyubiquitination catalyzed by ITCH. Requires 'Lys-63'-linked polyubiquitination for autophosphorylation and subsequent activation. 'Lys-63'-linked ubiquitination does not lead to proteasomal degradation. Deubiquitinated by CYLD, a protease that selectively cleaves 'Lys-63'-linked ubiquitin chains. Deubiquitinated by Y.enterocolitica YopP. Deubiquitinated by USP19; leading to negative regulation of TNF-alpha- and IL-1beta-triggered NF-kappa-B activation. (Microbial infection) Cleaved and inactivated by the proteases 3C of coxsackievirus A16 and human enterovirus D68, allowing the virus to disrupt TRAF6-triggered NF-kappa-B induction. Post-translationally, (Microbial infection) Acetylation of Thr-184 and Thr-187 by Yersinia YopJ prevents phosphorylation and activation, thus blocking the MAPK signaling pathway. As to expression, isoform 1A is the most abundant in ovary, skeletal muscle, spleen and blood mononuclear cells. Isoform 1B is highly expressed in brain, kidney and small intestine. Isoform 1C is the major form in prostate. Isoform 1D is the less abundant form.

The protein resides in the cytoplasm. It is found in the cell membrane. It carries out the reaction L-seryl-[protein] + ATP = O-phospho-L-seryl-[protein] + ADP + H(+). The catalysed reaction is L-threonyl-[protein] + ATP = O-phospho-L-threonyl-[protein] + ADP + H(+). Activated by pro-inflammatory cytokines and in response to physical and chemical stresses, including osmotic stress, oxidative stress, arsenic and ultraviolet light irradiation. Activated by 'Lys-63'-linked polyubiquitination and by autophosphorylation. Association with TAB1/MAP3K7IP1 and TAB2/MAP3K7IP2 promotes activation through autophosphorylation, whereas PPM1B/PP2CB, PP2A and PPP6C dephosphorylation leads to inactivation. Ceramides are also able to activate MAP3K7/TAK1. Serine/threonine kinase which acts as an essential component of the MAP kinase signal transduction pathway. Plays an important role in the cascades of cellular responses evoked by changes in the environment. Mediates signal transduction of TRAF6, various cytokines including interleukin-1 (IL-1), transforming growth factor-beta (TGFB), TGFB-related factors like BMP2 and BMP4, toll-like receptors (TLR), tumor necrosis factor receptor CD40 and B-cell receptor (BCR). Once activated, acts as an upstream activator of the MKK/JNK signal transduction cascade and the p38 MAPK signal transduction cascade through the phosphorylation and activation of several MAP kinase kinases like MAP2K1/MEK1, MAP2K3/MKK3, MAP2K6/MKK6 and MAP2K7/MKK7. These MAP2Ks in turn activate p38 MAPKs and c-jun N-terminal kinases (JNKs); both p38 MAPK and JNK pathways control the transcription factors activator protein-1 (AP-1). Independently of MAP2Ks and p38 MAPKs, acts as a key activator of NF-kappa-B by promoting activation of the I-kappa-B-kinase (IKK) core complex. Mechanistically, recruited to polyubiquitin chains of RIPK2 and IKBKG/NEMO via TAB2/MAP3K7IP2 and TAB3/MAP3K7IP3, and catalyzes phosphorylation and activation of IKBKB/IKKB component of the IKK complex, leading to NF-kappa-B activation. In osmotic stress signaling, plays a major role in the activation of MAPK8/JNK1, but not that of NF-kappa-B. Promotes TRIM5 capsid-specific restriction activity. Phosphorylates RIPK1 at 'Ser-321' which positively regulates RIPK1 interaction with RIPK3 to promote necroptosis but negatively regulates RIPK1 kinase activity and its interaction with FADD to mediate apoptosis. Phosphorylates STING1 in response to cGAMP-activation, promoting association between STEEP1 and STING1 and STING1 translocation to COPII vesicles. In Homo sapiens (Human), this protein is Mitogen-activated protein kinase kinase kinase 7.